The chain runs to 309 residues: Coproporphyrin III ferrochelatase (309 aa).

Fe-coproporphyrin III is bound by residues Tyr-12, Arg-29, 45–46, Ser-53, and Tyr-124; that span reads RY. 2 residues coordinate Fe(2+): His-182 and Glu-263.

The protein belongs to the ferrochelatase family.

Its subcellular location is the cytoplasm. The catalysed reaction is Fe-coproporphyrin III + 2 H(+) = coproporphyrin III + Fe(2+). It functions in the pathway porphyrin-containing compound metabolism; protoheme biosynthesis. In terms of biological role, involved in coproporphyrin-dependent heme b biosynthesis. Catalyzes the insertion of ferrous iron into coproporphyrin III to form Fe-coproporphyrin III. The sequence is that of Coproporphyrin III ferrochelatase from Listeria innocua serovar 6a (strain ATCC BAA-680 / CLIP 11262).